We begin with the raw amino-acid sequence, 254 residues long: Alcohol dehydrogenase (254 aa).

10 to 33 (FVAGLGGIGLDTSRELVKRNLKNL) serves as a coordination point for NAD(+). Residue S138 coordinates substrate. Residue Y151 is the Proton acceptor of the active site.

The protein belongs to the short-chain dehydrogenases/reductases (SDR) family. As to quaternary structure, homodimer.

It catalyses the reaction a primary alcohol + NAD(+) = an aldehyde + NADH + H(+). The enzyme catalyses a secondary alcohol + NAD(+) = a ketone + NADH + H(+). This Drosophila persimilis (Fruit fly) protein is Alcohol dehydrogenase (Adh).